A 159-amino-acid chain; its full sequence is Aspartate carbamoyltransferase regulatory chain (159 aa).

Zn(2+) is bound by residues Cys113, Cys118, Cys142, and Cys145.

It belongs to the PyrI family. Contains catalytic and regulatory chains. Requires Zn(2+) as cofactor.

Involved in allosteric regulation of aspartate carbamoyltransferase. In Saccharolobus islandicus (strain Y.N.15.51 / Yellowstone #2) (Sulfolobus islandicus), this protein is Aspartate carbamoyltransferase regulatory chain.